The sequence spans 354 residues: UDP-3-O-acylglucosamine N-acyltransferase (354 aa).

The active-site Proton acceptor is the H257.

This sequence belongs to the transferase hexapeptide repeat family. LpxD subfamily. Homotrimer.

It carries out the reaction a UDP-3-O-[(3R)-3-hydroxyacyl]-alpha-D-glucosamine + a (3R)-hydroxyacyl-[ACP] = a UDP-2-N,3-O-bis[(3R)-3-hydroxyacyl]-alpha-D-glucosamine + holo-[ACP] + H(+). The protein operates within bacterial outer membrane biogenesis; LPS lipid A biosynthesis. Its function is as follows. Catalyzes the N-acylation of UDP-3-O-acylglucosamine using 3-hydroxyacyl-ACP as the acyl donor. Is involved in the biosynthesis of lipid A, a phosphorylated glycolipid that anchors the lipopolysaccharide to the outer membrane of the cell. In Rhizobium johnstonii (strain DSM 114642 / LMG 32736 / 3841) (Rhizobium leguminosarum bv. viciae), this protein is UDP-3-O-acylglucosamine N-acyltransferase.